We begin with the raw amino-acid sequence, 213 residues long: Germin-like protein 8-14 (213 aa).

The signal sequence occupies residues Met-1–Ala-23. A disulfide bridge links Cys-29 with Cys-44. Positions His-56–Lys-203 constitute a Cupin type-1 domain. Asn-63 is a glycosylation site (N-linked (GlcNAc...) asparagine). Mn(2+) is bound by residues His-104, His-106, Glu-111, and His-151.

Belongs to the germin family. As to quaternary structure, oligomer (believed to be a pentamer but probably hexamer). In terms of processing, phosphorylated on threonine residue.

It is found in the secreted. The protein localises to the extracellular space. The protein resides in the apoplast. Functionally, may play a role in plant defense. Probably has no oxalate oxidase activity even if the active site is conserved. The chain is Germin-like protein 8-14 (GER5) from Oryza sativa subsp. japonica (Rice).